Here is an 85-residue protein sequence, read N- to C-terminus: U4-theraphotoxin-Hhn1o (85 aa).

The N-terminal stretch at 1-22 (MKVTLIAILTCAAVLVLHTTAA) is a signal peptide. Residues 23-48 (EELEAESQLMEVGMPDTELAAVDEER) constitute a propeptide that is removed on maturation. 3 cysteine pairs are disulfide-bonded: Cys-52-Cys-66, Cys-56-Cys-77, and Cys-71-Cys-82.

This sequence belongs to the neurotoxin 12 (Hwtx-2) family. 02 (Hwtx-2) subfamily. As to expression, expressed by the venom gland.

It localises to the secreted. Its function is as follows. Postsynaptic neurotoxin. This chain is U4-theraphotoxin-Hhn1o, found in Cyriopagopus hainanus (Chinese bird spider).